A 330-amino-acid polypeptide reads, in one-letter code: Methionyl-tRNA formyltransferase (330 aa).

Ser-112–Pro-115 lines the (6S)-5,6,7,8-tetrahydrofolate pocket.

The protein belongs to the Fmt family.

It carries out the reaction L-methionyl-tRNA(fMet) + (6R)-10-formyltetrahydrofolate = N-formyl-L-methionyl-tRNA(fMet) + (6S)-5,6,7,8-tetrahydrofolate + H(+). Its function is as follows. Attaches a formyl group to the free amino group of methionyl-tRNA(fMet). The formyl group appears to play a dual role in the initiator identity of N-formylmethionyl-tRNA by promoting its recognition by IF2 and preventing the misappropriation of this tRNA by the elongation apparatus. In Synechococcus sp. (strain RCC307), this protein is Methionyl-tRNA formyltransferase.